We begin with the raw amino-acid sequence, 83 residues long: Cytochrome b559 subunit alpha (83 aa).

A helical membrane pass occupies residues 21-35; the sequence is VIHSITIPSLFIAGW. H23 provides a ligand contact to heme.

Belongs to the PsbE/PsbF family. Heterodimer of an alpha subunit and a beta subunit. PSII is composed of 1 copy each of membrane proteins PsbA, PsbB, PsbC, PsbD, PsbE, PsbF, PsbH, PsbI, PsbJ, PsbK, PsbL, PsbM, PsbT, PsbX, PsbY, PsbZ, Psb30/Ycf12, at least 3 peripheral proteins of the oxygen-evolving complex and a large number of cofactors. It forms dimeric complexes. The cofactor is heme b.

The protein resides in the plastid. The protein localises to the chloroplast thylakoid membrane. Functionally, this b-type cytochrome is tightly associated with the reaction center of photosystem II (PSII). PSII is a light-driven water:plastoquinone oxidoreductase that uses light energy to abstract electrons from H(2)O, generating O(2) and a proton gradient subsequently used for ATP formation. It consists of a core antenna complex that captures photons, and an electron transfer chain that converts photonic excitation into a charge separation. This is Cytochrome b559 subunit alpha from Zygnema circumcarinatum (Green alga).